A 386-amino-acid polypeptide reads, in one-letter code: Ribosomal large subunit pseudouridine synthase B (386 aa).

Residues 14-75 enclose the S4 RNA-binding domain; it reads EKLQKVLARL…IRREEAAESV (62 aa). The active-site Nucleophile is Asp-119. The segment at 260-386 is disordered; that stretch reads ALPGMTTKAR…GDGMRPGFRR (127 aa). Composition is skewed to basic and acidic residues over residues 267–276 and 284–306; these read KAREKAERQQ and ARSE…ENAA. Residues 307 to 321 show a composition bias toward low complexity; sequence RRAPASRPARGPQPS. Positions 335-354 are enriched in basic and acidic residues; it reads ERPRESNRKPRPSKPRDERP.

It belongs to the pseudouridine synthase RsuA family.

The enzyme catalyses uridine(2605) in 23S rRNA = pseudouridine(2605) in 23S rRNA. In terms of biological role, responsible for synthesis of pseudouridine from uracil-2605 in 23S ribosomal RNA. The protein is Ribosomal large subunit pseudouridine synthase B (rluB) of Pseudomonas aeruginosa (strain ATCC 15692 / DSM 22644 / CIP 104116 / JCM 14847 / LMG 12228 / 1C / PRS 101 / PAO1).